The chain runs to 117 residues: UPF0102 protein FTF0898c (117 aa).

This sequence belongs to the UPF0102 family.

The sequence is that of UPF0102 protein FTF0898c from Francisella tularensis subsp. tularensis (strain FSC 198).